The chain runs to 568 residues: 2-succinyl-5-enolpyruvyl-6-hydroxy-3-cyclohexene-1-carboxylate synthase (568 aa).

This sequence belongs to the TPP enzyme family. MenD subfamily. In terms of assembly, homodimer. The cofactor is Mg(2+). It depends on Mn(2+) as a cofactor. Requires thiamine diphosphate as cofactor.

It carries out the reaction isochorismate + 2-oxoglutarate + H(+) = 5-enolpyruvoyl-6-hydroxy-2-succinyl-cyclohex-3-ene-1-carboxylate + CO2. It functions in the pathway quinol/quinone metabolism; 1,4-dihydroxy-2-naphthoate biosynthesis; 1,4-dihydroxy-2-naphthoate from chorismate: step 2/7. It participates in quinol/quinone metabolism; menaquinone biosynthesis. In terms of biological role, catalyzes the thiamine diphosphate-dependent decarboxylation of 2-oxoglutarate and the subsequent addition of the resulting succinic semialdehyde-thiamine pyrophosphate anion to isochorismate to yield 2-succinyl-5-enolpyruvyl-6-hydroxy-3-cyclohexene-1-carboxylate (SEPHCHC). In Haemophilus influenzae (strain ATCC 51907 / DSM 11121 / KW20 / Rd), this protein is 2-succinyl-5-enolpyruvyl-6-hydroxy-3-cyclohexene-1-carboxylate synthase.